Consider the following 150-residue polypeptide: MSSRRSSLSPWKCPWFVYCFERPISREAGPVVHQSPTVLYLHSELAARQTQGRLLPREPAAEDLRLSLPGGHAALGLFKLQGKDSYPHPPTVLLGEDLSSSGWNSWVFGILNISRDEEAIGILTTILQLRETESSAVKWTHTKHSRELGP.

This is an uncharacterized protein from Homo sapiens (Human).